An 817-amino-acid chain; its full sequence is V-type proton ATPase subunit a1 (817 aa).

At 1-422 (MEEFLDKLPQ…PAVYSVVTYP (422 aa)) the chain is on the cytoplasmic side. Residues 97 to 133 (DIALGDLERQLADHEHEVLEMNSNSEKLRQTYNELLE) are a coiled coil. A helical transmembrane segment spans residues 423–443 (FLFAVMFGDWGHGLCLLLGAL). The Vacuolar portion of the chain corresponds to 444–468 (YLLARERKLSTQKLGSFMEMLFGGR). The chain crosses the membrane as a helical span at residues 469–489 (YVILLMALFSIYCGLIYNEFF). The Cytoplasmic segment spans residues 490–547 (SVPFHIFGGSAYKCRDTTCSDAYTVGLIKYRDPYPFGVDPSWRGSRTELPYLNSLKMK). The helical transmembrane segment at 548-568 (MSILLGIAQMNLGLILSFFNA) threads the bilayer. At 569–580 (RFFGSSLDIRYQ) the chain is on the vacuolar side. A helical membrane pass occupies residues 581–601 (FIPQMIFLNSLFGYLSLLIII). The Cytoplasmic portion of the chain corresponds to 602-639 (KWCTGSQADLYHVMIYMFLSPTEELGENELFWGQRPLQ). A helical membrane pass occupies residues 640 to 660 (IVLLLLAFIAVPWMLFPKPFA). The Vacuolar portion of the chain corresponds to 661 to 758 (LRKIHMERFQ…VLLLAWGYEN (98 aa)). Residues 759 to 779 (ILIRLIGVAVFAFATAFILLM) traverse the membrane as a helical segment. Residues 780–817 (METLSAFLHALRLHWVEFMGKFFNGDGYKFKPFSFALI) lie on the Cytoplasmic side of the membrane.

It belongs to the V-ATPase 116 kDa subunit family. V-ATPase is a heteromultimeric enzyme composed of a peripheral catalytic V1 complex (components A to H) attached to an integral membrane V0 proton pore complex (components: a, c, c'', d and e).

The protein resides in the vacuole membrane. It localises to the golgi apparatus. Its subcellular location is the trans-Golgi network membrane. Its function is as follows. Essential component of the vacuolar proton pump (V-ATPase), a multimeric enzyme that catalyzes the translocation of protons across the membranes. Required for assembly and activity of the V-ATPase. Required during cell expansion. This chain is V-type proton ATPase subunit a1, found in Arabidopsis thaliana (Mouse-ear cress).